A 125-amino-acid polypeptide reads, in one-letter code: uncharacterized protein (125 aa).

The segment covering 1-33 has biased composition (polar residues); it reads MLPHQNSSYTRQGTNDAQANDMRSPSQLPTSVN. Disordered regions lie at residues 1–35 and 44–63; these read MLPH…VNIE and SEKL…KKHT. The segment covering 53–63 has biased composition (basic residues); it reads NRSRSGIKKHT.

This is an uncharacterized protein from Schizosaccharomyces pombe (strain 972 / ATCC 24843) (Fission yeast).